The primary structure comprises 162 residues: Inner membrane protein YbjO (162 aa).

Residues 1–23 are Periplasmic-facing; it reads MEDETLGFFKKTSSSHARLNVPA. Residues 24–44 traverse the membrane as a helical segment; it reads LVQVAALAIIMIRGLDVLMIF. Topologically, residues 45-66 are cytoplasmic; sequence NTLGVRGIGEFIHRSVQTWSLT. A helical transmembrane segment spans residues 67–87; it reads LVFLSSLVLVFIEIWCAFSLV. Residues 88–94 lie on the Periplasmic side of the membrane; sequence KGRRWAR. The chain crosses the membrane as a helical span at residues 95 to 115; the sequence is WLYLLTQITAASYLWAASLGY. The Cytoplasmic portion of the chain corresponds to 116–162; that stretch reads GYPELFSIPGESKREIFHSLMLQKLPDMLILMLLFVPSTSRRFFQLQ.

The protein localises to the cell inner membrane. The protein is Inner membrane protein YbjO (ybjO) of Escherichia coli O157:H7.